Reading from the N-terminus, the 300-residue chain is Ribosomal protein L11 methyltransferase (300 aa).

S-adenosyl-L-methionine contacts are provided by threonine 152, glycine 173, aspartate 195, and asparagine 234.

The protein belongs to the methyltransferase superfamily. PrmA family.

It localises to the cytoplasm. The catalysed reaction is L-lysyl-[protein] + 3 S-adenosyl-L-methionine = N(6),N(6),N(6)-trimethyl-L-lysyl-[protein] + 3 S-adenosyl-L-homocysteine + 3 H(+). In terms of biological role, methylates ribosomal protein L11. The protein is Ribosomal protein L11 methyltransferase of Burkholderia ambifaria (strain MC40-6).